Reading from the N-terminus, the 183-residue chain is Translation initiation factor IF-3 (183 aa).

A compositionally biased stretch (polar residues) spans 1–13 (MKQPDRNQQQGAK). The interval 1-24 (MKQPDRNQQQGAKSNRPAINDEIR) is disordered.

This sequence belongs to the IF-3 family. Monomer.

The protein resides in the cytoplasm. Functionally, IF-3 binds to the 30S ribosomal subunit and shifts the equilibrium between 70S ribosomes and their 50S and 30S subunits in favor of the free subunits, thus enhancing the availability of 30S subunits on which protein synthesis initiation begins. This chain is Translation initiation factor IF-3, found in Acinetobacter baylyi (strain ATCC 33305 / BD413 / ADP1).